Consider the following 701-residue polypeptide: Peptide transporter 3 (701 aa).

Transmembrane regions (helical) follow at residues 29-49 (FSFY…HEFS), 55-75 (FIYH…SIMA), 91-111 (IYVV…SYPI), 119-139 (GLFV…AFAA), 154-174 (FSFF…ITPI), 188-208 (FPLA…LFLM), 269-289 (GLLN…LFDQ), 318-338 (INPV…YPAL), and 351-371 (AVGG…QLKV). 2 N-linked (GlcNAc...) asparagine glycosylation sites follow: Asn391 and Asn432. 3 consecutive transmembrane segments (helical) span residues 575 to 595 (ILWS…LSVT), 611 to 631 (VLTA…MMIS), and 641 to 661 (LEFF…ILLA).

This sequence belongs to the major facilitator superfamily. Proton-dependent oligopeptide transporter (POT/PTR) (TC 2.A.17) family. As to expression, expressed in the AVA interneuron.

The protein localises to the membrane. In terms of biological role, neuron-specific, H(+)-coupled oligopeptide transporter with broad specificity towards di- and tripeptides in a Na(+) and Cl(-)-independent manner. Shows H(+) channel activity in the absence of peptide substrates. The polypeptide is Peptide transporter 3 (pept-3) (Caenorhabditis elegans).